A 326-amino-acid chain; its full sequence is Vacuolar protein sorting-associated protein 26A (326 aa).

The protein belongs to the VPS26 family. As to quaternary structure, component of the heterotrimeric retromer cargo-selective complex (CSC) which is believed to associate with variable sorting nexins to form functionally distinct retromer complex variants.

The protein resides in the cytoplasm. It localises to the endosome membrane. The protein localises to the early endosome. Its function is as follows. Acts as a component of the retromer cargo-selective complex (CSC). The CSC is believed to be the core functional component of retromer or respective retromer complex variants acting to prevent missorting of selected transmembrane cargo proteins into the lysosomal degradation pathway. Retromer mediates retrograde transport of cargo proteins from endosomes to the trans-Golgi network (TGN). The chain is Vacuolar protein sorting-associated protein 26A (vps26a) from Xenopus tropicalis (Western clawed frog).